The primary structure comprises 90 residues: uncharacterized protein (90 aa).

Residues 1-18 (MSRALFAVVLAFPLIALA) form the signal peptide.

This is an uncharacterized protein from Escherichia coli (strain K12).